The primary structure comprises 144 residues: Large ribosomal subunit protein uL13 (144 aa).

This sequence belongs to the universal ribosomal protein uL13 family. Part of the 50S ribosomal subunit.

Its function is as follows. This protein is one of the early assembly proteins of the 50S ribosomal subunit, although it is not seen to bind rRNA by itself. It is important during the early stages of 50S assembly. This chain is Large ribosomal subunit protein uL13, found in Herpetosiphon aurantiacus (strain ATCC 23779 / DSM 785 / 114-95).